Here is a 283-residue protein sequence, read N- to C-terminus: Pantothenate synthetase 2 (283 aa).

34–41 (MGALHDGH) contacts ATP. The active-site Proton donor is His41. Gln65 serves as a coordination point for (R)-pantoate. Gln65 lines the beta-alanine pocket. 152-155 (GEKD) provides a ligand contact to ATP. Gln158 is a binding site for (R)-pantoate. Residues Val181 and 189–192 (MSSR) each bind ATP.

This sequence belongs to the pantothenate synthetase family. Homodimer.

The protein localises to the cytoplasm. It carries out the reaction (R)-pantoate + beta-alanine + ATP = (R)-pantothenate + AMP + diphosphate + H(+). It functions in the pathway cofactor biosynthesis; (R)-pantothenate biosynthesis; (R)-pantothenate from (R)-pantoate and beta-alanine: step 1/1. Its function is as follows. Catalyzes the condensation of pantoate with beta-alanine in an ATP-dependent reaction via a pantoyl-adenylate intermediate. This chain is Pantothenate synthetase 2, found in Bradyrhizobium diazoefficiens (strain JCM 10833 / BCRC 13528 / IAM 13628 / NBRC 14792 / USDA 110).